Here is a 1098-residue protein sequence, read N- to C-terminus: Early transcription factor large subunit homolog (1098 aa).

The Helicase ATP-binding domain occupies 17–317 (KGGRAFFPCD…PNGQPLQRQQ (301 aa)). 64–71 (WQTGTGKS) is a binding site for ATP. The DEAH box motif lies at 246–249 (DEIH). Residues 489-689 (MMKDILSIIR…EGDKALRKHA (201 aa)) form the Helicase C-terminal domain.

The protein belongs to the DEAD box helicase family. DEAH subfamily.

The protein localises to the virion. It catalyses the reaction ATP + H2O = ADP + phosphate + H(+). Its function is as follows. Putative initation factor. The protein is Early transcription factor large subunit homolog of African swine fever virus (isolate Tick/Malawi/Lil 20-1/1983) (ASFV).